A 98-amino-acid chain; its full sequence is Phosphoribosyl-ATP pyrophosphatase (98 aa).

Belongs to the PRA-PH family.

It localises to the cytoplasm. It catalyses the reaction 1-(5-phospho-beta-D-ribosyl)-ATP + H2O = 1-(5-phospho-beta-D-ribosyl)-5'-AMP + diphosphate + H(+). It functions in the pathway amino-acid biosynthesis; L-histidine biosynthesis; L-histidine from 5-phospho-alpha-D-ribose 1-diphosphate: step 2/9. This Haloarcula marismortui (strain ATCC 43049 / DSM 3752 / JCM 8966 / VKM B-1809) (Halobacterium marismortui) protein is Phosphoribosyl-ATP pyrophosphatase.